Here is a 254-residue protein sequence, read N- to C-terminus: Triosephosphate isomerase (254 aa).

Substrate is bound at residue Asn12–Lys14. Catalysis depends on His99, which acts as the Electrophile. Glu169 (proton acceptor) is an active-site residue. Substrate is bound by residues Gly175, Ser214, and Gly235–Gly236.

Belongs to the triosephosphate isomerase family. As to quaternary structure, homodimer.

It localises to the cytoplasm. It catalyses the reaction D-glyceraldehyde 3-phosphate = dihydroxyacetone phosphate. The protein operates within carbohydrate biosynthesis; gluconeogenesis. It participates in carbohydrate degradation; glycolysis; D-glyceraldehyde 3-phosphate from glycerone phosphate: step 1/1. Its function is as follows. Involved in the gluconeogenesis. Catalyzes stereospecifically the conversion of dihydroxyacetone phosphate (DHAP) to D-glyceraldehyde-3-phosphate (G3P). The sequence is that of Triosephosphate isomerase from Brucella abortus biovar 1 (strain 9-941).